Reading from the N-terminus, the 205-residue chain is High frequency lysogenization protein HflD homolog (205 aa).

It belongs to the HflD family.

The protein resides in the cytoplasm. It localises to the cell inner membrane. The sequence is that of High frequency lysogenization protein HflD homolog from Shewanella oneidensis (strain ATCC 700550 / JCM 31522 / CIP 106686 / LMG 19005 / NCIMB 14063 / MR-1).